A 208-amino-acid chain; its full sequence is Uracil phosphoribosyltransferase (208 aa).

Residues Arg-78, Arg-103, and 130-138 (DPMLATGGT) contribute to the 5-phospho-alpha-D-ribose 1-diphosphate site. Residues Ile-193 and 198–200 (GDA) each bind uracil. A 5-phospho-alpha-D-ribose 1-diphosphate-binding site is contributed by Asp-199.

This sequence belongs to the UPRTase family. Mg(2+) is required as a cofactor.

It carries out the reaction UMP + diphosphate = 5-phospho-alpha-D-ribose 1-diphosphate + uracil. The protein operates within pyrimidine metabolism; UMP biosynthesis via salvage pathway; UMP from uracil: step 1/1. With respect to regulation, allosterically activated by GTP. Catalyzes the conversion of uracil and 5-phospho-alpha-D-ribose 1-diphosphate (PRPP) to UMP and diphosphate. The sequence is that of Uracil phosphoribosyltransferase from Oleidesulfovibrio alaskensis (strain ATCC BAA-1058 / DSM 17464 / G20) (Desulfovibrio alaskensis).